Reading from the N-terminus, the 153-residue chain is Superoxide dismutase [Cu-Zn] (153 aa).

Cu cation-binding residues include H45, H47, and H62. C56 and C145 form a disulfide bridge. H62, H70, H79, and D82 together coordinate Zn(2+). H119 contributes to the Cu cation binding site.

It belongs to the Cu-Zn superoxide dismutase family. Homodimer. The cofactor is Cu cation. Requires Zn(2+) as cofactor.

It localises to the cytoplasm. The enzyme catalyses 2 superoxide + 2 H(+) = H2O2 + O2. In terms of biological role, destroys radicals which are normally produced within the cells and which are toxic to biological systems. This chain is Superoxide dismutase [Cu-Zn] (SOD), found in Schistosoma mansoni (Blood fluke).